A 433-amino-acid chain; its full sequence is MKKRLYIETLGCAMNVRDSEHIIAELTQKEDYELTQNLQEADLILINTCSVREKPVHKLFSEIGYFNKKKKEGAKIGVCGCTASHLGEEIIKKAPYVSFVLGARNVSKIRDVIKQEKAVEVDIDYDESTYAFSDFRTSPYKAFINISIGCDKKCTFCIVPNTRGEEISIPPELILQEVRRAVDTGAKEIFLLGQNVNNYGRSFSDKARKVDFTDLLRMVSEIDGVRRIRFTSPHPLHMDDKFLQEFATNPKICKSMHMPLQSGSTKVLRDMKRGYTKEWFLDRAMKLREMVPEVHISTDIIVGFPGESEEDFADTIDVVQKVRFEQIFSFKYSPRPLTPAKDYENQIPDEVASRRLSYLQDLHLQMLDSISEQEKDKVYEVYFEELKPGGYVAGRTDNNWIVKVKGSEELLGEFKSVRITKPGRLSLEGELVG.

An MTTase N-terminal domain is found at 3–118; the sequence is KRLYIETLGC…IRDVIKQEKA (116 aa). 6 residues coordinate [4Fe-4S] cluster: Cys-12, Cys-49, Cys-81, Cys-150, Cys-154, and Cys-157. In terms of domain architecture, Radical SAM core spans 136-371; sequence RTSPYKAFIN…LHLQMLDSIS (236 aa). The TRAM domain maps to 372-433; the sequence is EQEKDKVYEV…RLSLEGELVG (62 aa).

Belongs to the methylthiotransferase family. MiaB subfamily. Monomer. [4Fe-4S] cluster serves as cofactor.

Its subcellular location is the cytoplasm. The enzyme catalyses N(6)-dimethylallyladenosine(37) in tRNA + (sulfur carrier)-SH + AH2 + 2 S-adenosyl-L-methionine = 2-methylsulfanyl-N(6)-dimethylallyladenosine(37) in tRNA + (sulfur carrier)-H + 5'-deoxyadenosine + L-methionine + A + S-adenosyl-L-homocysteine + 2 H(+). Functionally, catalyzes the methylthiolation of N6-(dimethylallyl)adenosine (i(6)A), leading to the formation of 2-methylthio-N6-(dimethylallyl)adenosine (ms(2)i(6)A) at position 37 in tRNAs that read codons beginning with uridine. This chain is tRNA-2-methylthio-N(6)-dimethylallyladenosine synthase, found in Nitratiruptor sp. (strain SB155-2).